The chain runs to 185 residues: Probable DNA-directed RNA polymerase subunit delta (185 aa).

The 68-residue stretch at 14 to 81 (LSMIEVAHAI…GDNTWGLRAW (68 aa)) folds into the HTH HARE-type domain. Positions 90–185 (ATVGENEEDE…DEEDEDEDDE (96 aa)) are disordered. 2 stretches are compositionally biased toward acidic residues: residues 117 to 167 (DTDD…DDGI) and 175 to 185 (HDEEDEDEDDE).

The protein belongs to the RpoE family. In terms of assembly, RNAP is composed of a core of 2 alpha, a beta and a beta' subunits. The core is associated with a delta subunit and one of several sigma factors.

In terms of biological role, participates in both the initiation and recycling phases of transcription. In the presence of the delta subunit, RNAP displays an increased specificity of transcription, a decreased affinity for nucleic acids, and an increased efficiency of RNA synthesis because of enhanced recycling. This chain is Probable DNA-directed RNA polymerase subunit delta, found in Limosilactobacillus reuteri (strain DSM 20016) (Lactobacillus reuteri).